Consider the following 37-residue polypeptide: Cytochrome b6-f complex subunit 5 (37 aa).

The chain crosses the membrane as a helical span at residues 5-25; that stretch reads LLSGIVLGLMPVTLAGLFTTA.

Belongs to the PetG family. As to quaternary structure, the 4 large subunits of the cytochrome b6-f complex are cytochrome b6, subunit IV (17 kDa polypeptide, PetD), cytochrome f and the Rieske protein, while the 4 small subunits are PetG, PetL, PetM and PetN. The complex functions as a dimer.

It is found in the plastid. It localises to the chloroplast thylakoid membrane. In terms of biological role, component of the cytochrome b6-f complex, which mediates electron transfer between photosystem II (PSII) and photosystem I (PSI), cyclic electron flow around PSI, and state transitions. PetG is required for either the stability or assembly of the cytochrome b6-f complex. The sequence is that of Cytochrome b6-f complex subunit 5 from Ostreococcus tauri.